The primary structure comprises 380 residues: Erythronate-4-phosphate dehydrogenase (380 aa).

Residues serine 45 and threonine 66 each contribute to the substrate site. NAD(+) is bound at residue aspartate 146. The active site involves arginine 207. Residue aspartate 232 participates in NAD(+) binding. Glutamate 237 is a catalytic residue. The active-site Proton donor is histidine 254. Glycine 257 contributes to the NAD(+) binding site. Tyrosine 258 contacts substrate.

Belongs to the D-isomer specific 2-hydroxyacid dehydrogenase family. PdxB subfamily. Homodimer.

The protein resides in the cytoplasm. The enzyme catalyses 4-phospho-D-erythronate + NAD(+) = (R)-3-hydroxy-2-oxo-4-phosphooxybutanoate + NADH + H(+). The protein operates within cofactor biosynthesis; pyridoxine 5'-phosphate biosynthesis; pyridoxine 5'-phosphate from D-erythrose 4-phosphate: step 2/5. Its function is as follows. Catalyzes the oxidation of erythronate-4-phosphate to 3-hydroxy-2-oxo-4-phosphonooxybutanoate. The sequence is that of Erythronate-4-phosphate dehydrogenase from Marinomonas sp. (strain MWYL1).